We begin with the raw amino-acid sequence, 346 residues long: Phosphoribosylformylglycinamidine cyclo-ligase (346 aa).

This sequence belongs to the AIR synthase family.

It is found in the cytoplasm. It carries out the reaction 2-formamido-N(1)-(5-O-phospho-beta-D-ribosyl)acetamidine + ATP = 5-amino-1-(5-phospho-beta-D-ribosyl)imidazole + ADP + phosphate + H(+). The protein operates within purine metabolism; IMP biosynthesis via de novo pathway; 5-amino-1-(5-phospho-D-ribosyl)imidazole from N(2)-formyl-N(1)-(5-phospho-D-ribosyl)glycinamide: step 2/2. In Prochlorococcus marinus (strain NATL1A), this protein is Phosphoribosylformylglycinamidine cyclo-ligase.